The chain runs to 84 residues: ATP synthase subunit c (84 aa).

2 helical membrane passes run 8–28 (VAGM…GGGI) and 56–76 (IIGS…AILL).

Belongs to the ATPase C chain family. F-type ATPases have 2 components, F(1) - the catalytic core - and F(0) - the membrane proton channel. F(1) has five subunits: alpha(3), beta(3), gamma(1), delta(1), epsilon(1). F(0) has three main subunits: a(1), b(2) and c(10-14). The alpha and beta chains form an alternating ring which encloses part of the gamma chain. F(1) is attached to F(0) by a central stalk formed by the gamma and epsilon chains, while a peripheral stalk is formed by the delta and b chains.

The protein localises to the cell membrane. F(1)F(0) ATP synthase produces ATP from ADP in the presence of a proton or sodium gradient. F-type ATPases consist of two structural domains, F(1) containing the extramembraneous catalytic core and F(0) containing the membrane proton channel, linked together by a central stalk and a peripheral stalk. During catalysis, ATP synthesis in the catalytic domain of F(1) is coupled via a rotary mechanism of the central stalk subunits to proton translocation. Its function is as follows. Key component of the F(0) channel; it plays a direct role in translocation across the membrane. A homomeric c-ring of between 10-14 subunits forms the central stalk rotor element with the F(1) delta and epsilon subunits. This Clostridium novyi (strain NT) protein is ATP synthase subunit c.